The chain runs to 247 residues: Pyrroloquinoline-quinone synthase (247 aa).

It belongs to the PqqC family.

The catalysed reaction is 6-(2-amino-2-carboxyethyl)-7,8-dioxo-1,2,3,4,7,8-hexahydroquinoline-2,4-dicarboxylate + 3 O2 = pyrroloquinoline quinone + 2 H2O2 + 2 H2O + H(+). It participates in cofactor biosynthesis; pyrroloquinoline quinone biosynthesis. Its function is as follows. Ring cyclization and eight-electron oxidation of 3a-(2-amino-2-carboxyethyl)-4,5-dioxo-4,5,6,7,8,9-hexahydroquinoline-7,9-dicarboxylic-acid to PQQ. The sequence is that of Pyrroloquinoline-quinone synthase from Rhizobium rhizogenes (strain K84 / ATCC BAA-868) (Agrobacterium radiobacter).